The following is a 135-amino-acid chain: Beta/delta-urticatoxin-Ui2a (135 aa).

Positions 1–18 (MGAIVLVAIMALVASSSA) are cleaved as a signal peptide. A propeptide spanning residues 19 to 72 (FSDDEQNMMNAEGEKGIRSYSAADDVSDMIESLFVNSGNRNLVLMMLSGRPQPN) is cleaved from the precursor. 6 cysteine pairs are disulfide-bonded: Cys75/Cys92, Cys82/Cys97, Cys91/Cys105, Cys107/Cys121, Cys114/Cys126, and Cys120/Cys134.

The protein belongs to the urticatoxin-2 family. As to expression, expressed in trichomes, that are stiff epidermal hairs located on the surface of petioles and leaves.

It localises to the secreted. In terms of biological role, plant defense neurotoxin that causes pain and systemic symptoms in mammals via modulation of voltage-gated sodium channels (Nav). Potent modulator of human Nav1.5/SCN5A (EC(50)=55 nM), Nav1.6/SCN8A (EC(50)=0.86 nM), and Nav1.7/SCN9A (EC(50)=208 nM), where it shifts the activation threshold to more negative potentials and delays fast inactivation. Also shifts the voltage-dependence of steady-state fast inactivation of Nav1.6/SCN8A, but not that of Nav1.5/SCN5A or Nav1.7/SCN9A. On Nav1.7/SCN9A, principally acts by binding to extracellular loops of domain IV (Nav site 3). In vivo, intraplantar injection into mice causes numerous dose-dependent, immediate, and long-lasting spontaneous pain behaviors, while no swelling is observed in the injected paw. At the highest doses tested, systemic symptoms including hypokinesia and hypersalivation are observed. This Urtica incisa (Scrub nettle) protein is Beta/delta-urticatoxin-Ui2a.